The following is a 226-amino-acid chain: MQRILIVEDEQKTGRYLQQGLVEEGYQADLFNNGRDGLGAASKGQYDLIILDVMLPFLDGWQIISALRESGHEEPVLFLTAKDNVRDKVKGLELGADDYLIKPFDFTELVARVRTLLRRARSQAATVCTIADMTVDMVRRTVIRSGKKIHLTGKEYVLLELLLQRTGEVLPRSLISSLVWNMNFDSDTNVIDVAVRRLRSKIDDDFEPKLIHTVRGAGYVLEIREE.

Positions Arg-3 to Leu-117 constitute a Response regulatory domain. Asp-52 bears the 4-aspartylphosphate mark. Positions Ala-125–Ile-223 form a DNA-binding region, ompR/PhoB-type.

Phosphorylated by PcoS.

The protein localises to the cytoplasm. Probable member of a two-component regulatory system PcoS/PcoR. May be involved in the activation of copper resistance gene operon pcoABCD by binding to a specific site on the cop operon promoter (copper box). The sequence is that of Transcriptional regulatory protein PcoR (pcoR) from Escherichia coli.